The sequence spans 350 residues: Small ribosomal subunit biogenesis GTPase RsgA (350 aa).

A compositionally biased stretch (polar residues) spans 1-17; the sequence is MSKNKLSKGQQRRVQAN. Residues 1–35 form a disordered region; that stretch reads MSKNKLSKGQQRRVQANHQRRLRTDRKPELDDSQL. The 171-residue stretch at 103–273 folds into the CP-type G domain; the sequence is TSVLTRPDLY…VIDSPGVREF (171 aa). GTP contacts are provided by residues 159 to 162 and 213 to 221; these read NKID and GQSGVGKSS. The Zn(2+) site is built by cysteine 297, cysteine 302, histidine 304, and cysteine 310.

The protein belongs to the TRAFAC class YlqF/YawG GTPase family. RsgA subfamily. In terms of assembly, monomer. Associates with 30S ribosomal subunit, binds 16S rRNA. Zn(2+) serves as cofactor.

Its subcellular location is the cytoplasm. One of several proteins that assist in the late maturation steps of the functional core of the 30S ribosomal subunit. Helps release RbfA from mature subunits. May play a role in the assembly of ribosomal proteins into the subunit. Circularly permuted GTPase that catalyzes slow GTP hydrolysis, GTPase activity is stimulated by the 30S ribosomal subunit. The protein is Small ribosomal subunit biogenesis GTPase RsgA of Yersinia enterocolitica serotype O:8 / biotype 1B (strain NCTC 13174 / 8081).